The sequence spans 53 residues: Temporin-SHd (53 aa).

The N-terminal stretch at 1-10 (FLGTINLSLC) is a signal peptide. Residues 11–34 (EQERDADEEKRDEPDESDVEVEKR) constitute a propeptide that is removed on maturation. Phe-51 carries the post-translational modification Phenylalanine amide.

The protein localises to the secreted. The protein resides in the target cell membrane. Its function is as follows. Non-amphipathic mildly cationic alpha-helical antimicrobial peptide with potent activity against Gram-positive (including methicillin-resistant Staphylococcus aureus (MRSA)) and Gram-negative bacteria, and some fungi, as well as against Trypanosoma and Leishmania (both promastigote and amastigote forms). Strongly and selectively perturbs anionic bilayer membranes by interacting with the polar head groups and acyl region of the phospholipids, with formation of regions of two coexisting phases, one phase rich in peptide and the other lipid-rich. Shows low hemolytic activity (LC(50)=44 uM) and a low toxicity for human monocytes THP-1 and THP-1-derived macrophages. Is not toxic to human hepatoma-derived cells. This is Temporin-SHd from Pelophylax saharicus (Sahara frog).